Consider the following 230-residue polypeptide: Orotidine 5'-phosphate decarboxylase (230 aa).

Residues aspartate 10, lysine 31, 58 to 67 (DLKLHDIPNT), threonine 117, arginine 179, glutamine 188, glycine 208, and arginine 209 contribute to the substrate site. The Proton donor role is filled by lysine 60.

This sequence belongs to the OMP decarboxylase family. Type 1 subfamily. Homodimer.

It catalyses the reaction orotidine 5'-phosphate + H(+) = UMP + CO2. It participates in pyrimidine metabolism; UMP biosynthesis via de novo pathway; UMP from orotate: step 2/2. Its function is as follows. Catalyzes the decarboxylation of orotidine 5'-monophosphate (OMP) to uridine 5'-monophosphate (UMP). The chain is Orotidine 5'-phosphate decarboxylase from Staphylococcus aureus (strain bovine RF122 / ET3-1).